A 251-amino-acid polypeptide reads, in one-letter code: Triosephosphate isomerase (251 aa).

Substrate is bound at residue N9–K11. The active-site Electrophile is H95. The Proton acceptor role is filled by E167. Substrate is bound by residues G173, S213, and G234–G235.

This sequence belongs to the triosephosphate isomerase family. As to quaternary structure, homodimer.

The protein resides in the cytoplasm. The catalysed reaction is D-glyceraldehyde 3-phosphate = dihydroxyacetone phosphate. The protein operates within carbohydrate biosynthesis; gluconeogenesis. It functions in the pathway carbohydrate degradation; glycolysis; D-glyceraldehyde 3-phosphate from glycerone phosphate: step 1/1. Functionally, involved in the gluconeogenesis. Catalyzes stereospecifically the conversion of dihydroxyacetone phosphate (DHAP) to D-glyceraldehyde-3-phosphate (G3P). The sequence is that of Triosephosphate isomerase from Pediococcus pentosaceus (strain ATCC 25745 / CCUG 21536 / LMG 10740 / 183-1w).